The following is a 436-amino-acid chain: GTPase Der (436 aa).

EngA-type G domains are found at residues 4–167 and 176–351; these read PVIA…PKIE and IRFS…ESHS. GTP-binding positions include 10 to 17, 57 to 61, 119 to 122, 182 to 189, 229 to 233, and 294 to 297; these read GRPNVGKS, DTGGI, NKVD, DTAGM, and NKWD. Residues 352–436 enclose the KH-like domain; that stretch reads IRVQTNVLND…PIHIIARARD (85 aa).

The protein belongs to the TRAFAC class TrmE-Era-EngA-EngB-Septin-like GTPase superfamily. EngA (Der) GTPase family. As to quaternary structure, associates with the 50S ribosomal subunit.

Its function is as follows. GTPase that plays an essential role in the late steps of ribosome biogenesis. This Bacillus cereus (strain G9842) protein is GTPase Der.